Here is a 194-residue protein sequence, read N- to C-terminus: MYVLFEGVDGVGKSTQIEMIARAHEDSLVTKEPGGTKIGQKLREILLGGDFKLSARAEILLFLADRAEHYQKMIKPNSSRLILSDRGFVSGVAYALANDASLKIDDLLWLNSFALEGKFADKIVFFEASETLIKKRLSSRGLIDAIEARGLKYLLKVQECMKEVLKAHKFNVLYIDASEDIATINAKIENFIKF.

7–14 is an ATP binding site; that stretch reads GVDGVGKS.

The protein belongs to the thymidylate kinase family.

It carries out the reaction dTMP + ATP = dTDP + ADP. Phosphorylation of dTMP to form dTDP in both de novo and salvage pathways of dTTP synthesis. The chain is Thymidylate kinase from Campylobacter curvus (strain 525.92).